Consider the following 1429-residue polypeptide: Nitric oxide synthase 1 (1429 aa).

An interaction with NOSIP region spans residues 1–200 (MEENTFGVQQ…LQDIGEHDEL (200 aa)). Positions 17 to 99 (SVRLFKRKVG…ETHVVLILRG (83 aa)) constitute a PDZ domain. Disordered regions lie at residues 152 to 174 (VTGL…SVSQ), 214 to 255 (GSKA…DNDR), and 271 to 298 (NNPY…SRCP). Low complexity predominate over residues 160–174 (QHAQGHGQGAGSVSQ). The interaction with DYNLL1/PIN stretch occupies residues 163–240 (QGHGQGAGSV…TGIQVDRDLD (78 aa)). Residues 226 to 243 (AEMKDTGIQVDRDLDGKS) are compositionally biased toward basic and acidic residues. Phosphoserine is present on Ser280. Positions 280–294 (SPTSGKQSPTKNGSP) are enriched in polar residues. A (6R)-L-erythro-5,6,7,8-tetrahydrobiopterin-binding site is contributed by Ser334. Cys415 lines the heme b pocket. Residues Gln478, Trp587, Tyr588, and Glu592 each contribute to the L-arginine site. Residues Val677, Trp678, and Phe691 each coordinate (6R)-L-erythro-5,6,7,8-tetrahydrobiopterin. Heme b is bound at residue Tyr706. The interval 725–745 (KRRAIGFKKLAEAVKFSAKLM) is calmodulin-binding. A Flavodoxin-like domain is found at 755–935 (ATILYATETG…AFRTWAKKVF (181 aa)). FMN contacts are provided by Thr761, Glu762, Thr763, Lys765, Ser766, Ser807, Thr808, and Gly812. 3 positions are modified to phosphoserine: Ser847, Ser857, and Ser858. Positions 886, 891, 893, 919, and 923 each coordinate FMN. The FAD-binding FR-type domain maps to 990–1237 (KRVSAARLLS…VRGAPSFHLP (248 aa)). Arg1010 serves as a coordination point for NADP(+). 7 residues coordinate FAD: His1032, Arg1173, Tyr1174, Tyr1175, Ser1176, Thr1191, and Ala1193. Position 1196 (Ser1196) interacts with NADP(+). FAD-binding residues include Tyr1197, Val1210, Cys1211, and Ser1212. NADP(+)-binding residues include Thr1251, Arg1284, Ser1313, Arg1314, Lys1320, Tyr1322, Gln1324, Asp1357, Thr1398, and Arg1400.

This sequence belongs to the NOS family. In terms of assembly, homodimer. Interacts with DLG4 (via N-terminal tandem pair of PDZ domains); the interaction possibly being prevented by the association between NOS1 and CAPON. Forms a ternary complex with CAPON and RASD1. Forms a ternary complex with CAPON and SYN1. Interacts with ZDHHC23. Interacts with NOSIP; which may impair its synaptic location. Interacts with HTR4. Interacts with SLC6A4. Interacts with VAC14. Forms a complex with ASL, ASS1 and SLC7A1; the complex regulates cell-autonomous L-arginine synthesis and citrulline recycling while channeling extracellular L-arginine to nitric oxide synthesis pathway. Interacts with DMD; localizes NOS1 to sarcolemma in muscle cells. Interacts with DYNLL1; inhibits the nitric oxide synthase activity. The cofactor is heme b. It depends on FAD as a cofactor. Requires FMN as cofactor. (6R)-L-erythro-5,6,7,8-tetrahydrobiopterin is required as a cofactor. Post-translationally, ubiquitinated; mediated by STUB1/CHIP in the presence of Hsp70 and Hsp40 (in vitro). In terms of tissue distribution, isoform N-NOS-1 is expressed in brain and colorectum. Found in the Auerbach's plexus of the enteric nervous system. Isoform PNNOS is expressed in the penis, urethra, prostate, and skeletal muscle, and coexists with the cerebellar nnos in the pelvic plexus, bladder and liver, and is detectable in the cerebellum.

The protein localises to the cell membrane. It localises to the sarcolemma. Its subcellular location is the cell projection. It is found in the dendritic spine. It carries out the reaction 2 L-arginine + 3 NADPH + 4 O2 + H(+) = 2 L-citrulline + 2 nitric oxide + 3 NADP(+) + 4 H2O. Its activity is regulated as follows. Stimulated by calcium/calmodulin. Inhibited by DYNLL1 that prevents the dimerization of the protein. Inhibited by NOSIP. In terms of biological role, produces nitric oxide (NO) which is a messenger molecule with diverse functions throughout the body. In the brain and peripheral nervous system, NO displays many properties of a neurotransmitter. Inhibitory transmitter for non-adrenergic and non-cholinergic nerves in the colorectum. Probably has nitrosylase activity and mediates cysteine S-nitrosylation of cytoplasmic target proteins such SRR. Inhibitory transmitter for non-adrenergic and non-cholinergic nerves in the colorectum. The polypeptide is Nitric oxide synthase 1 (Rattus norvegicus (Rat)).